Reading from the N-terminus, the 170-residue chain is Adenine phosphoribosyltransferase (170 aa).

Belongs to the purine/pyrimidine phosphoribosyltransferase family. In terms of assembly, homodimer.

It is found in the cytoplasm. The catalysed reaction is AMP + diphosphate = 5-phospho-alpha-D-ribose 1-diphosphate + adenine. It functions in the pathway purine metabolism; AMP biosynthesis via salvage pathway; AMP from adenine: step 1/1. Its function is as follows. Catalyzes a salvage reaction resulting in the formation of AMP, that is energically less costly than de novo synthesis. This Bacillus pumilus (strain SAFR-032) protein is Adenine phosphoribosyltransferase.